A 337-amino-acid chain; its full sequence is KEVENQQKLANVVILATGGTIAGAGASAANSATYQAAKVGVDKLIAGVPELADLANVRGEQVMQIASESITNDDLLKLGKRVAELADSNDVDGIVITHGTDTLEETAYFLDLTLNTDKPIVVVGSMRPGTAMSADGMLNLYNAVAVASNKDSRGKGVLVTMNDEIQSGRDVSKSINIKTEAFKSAWGPLGMVVEGKSYWFRLPAKRHTVNSEFDIKQISSLPQVDIAYSYGNVTDTAYKALAQNGAKALIHAGTGNGSVSSRLTPALQTLRKTGTQIIRSSHVNQGGFVLRNAEQPDDKNDWVVAHDLNPEKARILVELAMVKTQDSKELQRIFWEY.

In terms of domain architecture, Asparaginase/glutaminase spans 10-337 (ANVVILATGG…KELQRIFWEY (328 aa)). Residue Thr20 is the Acyl-ester intermediate of the active site. Residues Ser67 and 100-101 (TD) each bind substrate.

Belongs to the asparaginase 1 family. Homotetramer.

The protein localises to the periplasm. The catalysed reaction is L-glutamine + H2O = L-glutamate + NH4(+). It carries out the reaction L-asparagine + H2O = L-aspartate + NH4(+). This chain is Glutaminase-asparaginase (ansB), found in Pseudomonas sp. (strain ATCC 29598 / 7A).